The primary structure comprises 516 residues: L-amino acid oxidase (516 aa).

The first 18 residues, 1–18, serve as a signal peptide directing secretion; it reads MNVFFMFSLLFLAALESC. Residues 61–62, 81–82, R89, and 105–108 contribute to the FAD site; these read MS, EA, and GPMR. Residue R108 coordinates substrate. N190 carries N-linked (GlcNAc...) asparagine glycosylation. V279 lines the FAD pocket. N-linked (GlcNAc...) asparagine glycosylation is found at N299 and N404. C349 and C430 are joined by a disulfide. Residues E475 and 482 to 487 each bind FAD; that span reads GWIDST. Residue 482–483 coordinates substrate; that stretch reads GW.

This sequence belongs to the flavin monoamine oxidase family. FIG1 subfamily. Homodimer; non-covalently linked. It depends on FAD as a cofactor. In terms of processing, N-glycosylated (14%). The enzymatic activity remains unchanged after deglycosylation. As to expression, expressed by the venom gland.

It is found in the secreted. The enzyme catalyses an L-alpha-amino acid + O2 + H2O = a 2-oxocarboxylate + H2O2 + NH4(+). It carries out the reaction L-leucine + O2 + H2O = 4-methyl-2-oxopentanoate + H2O2 + NH4(+). It catalyses the reaction L-phenylalanine + O2 + H2O = 3-phenylpyruvate + H2O2 + NH4(+). The catalysed reaction is L-tryptophan + O2 + H2O = indole-3-pyruvate + H2O2 + NH4(+). The enzyme catalyses L-methionine + O2 + H2O = 4-methylsulfanyl-2-oxobutanoate + H2O2 + NH4(+). It carries out the reaction L-isoleucine + O2 + H2O = (S)-3-methyl-2-oxopentanoate + H2O2 + NH4(+). Its activity is regulated as follows. Inhibited by the substrate analog N-acetyl tryptophan. In terms of biological role, catalyzes an oxidative deamination of predominantly hydrophobic and aromatic L-amino acids, thus producing hydrogen peroxide that may contribute to the diverse toxic effects of this enzyme. Is highly active on L-Met&gt;L-Leu&gt;L-Phe&gt;L-Trp=L-Ile. Binds to the cell surface and enables the production of highly localized concentration of hydrogen peroxide in or near the binding interfaces. Does not bind to phospholipids. Induces platelet-rich plasma aggregation, shows cytotoxic effects on some cancer cell lines (B16-F10 (mouse melanoma), PC12 (rat pheochromocytoma), MCF-7 and MDA-MB-231 (human breast carcinoma)) and shows antibacterial activities against both Gram-positive and Gram-negative bacteria. Also exhibits hemorrhage and edema. Does not show cytotoxicity on erythrocytes and peripheral blood mononuclear cells. Its effect on platelets is controversial, since it either induces aggregation or inhibits agonist-induced aggregation. These different effects are probably due to different experimental conditions. The sequence is that of L-amino acid oxidase from Cerastes cerastes (Horned desert viper).